Here is a 226-residue protein sequence, read N- to C-terminus: V-type proton ATPase subunit E 2 (226 aa).

It belongs to the V-ATPase E subunit family. V-ATPase is a heteromultimeric enzyme made up of two complexes: the ATP-hydrolytic V1 complex and the proton translocation V0 complex. The V1 complex consists of three catalytic AB heterodimers that form a heterohexamer, three peripheral stalks each consisting of EG heterodimers, one central rotor including subunits D and F, and the regulatory subunits C and H. The proton translocation complex V0 consists of the proton transport subunit a, a ring of proteolipid subunits c9c'', rotary subunit d, subunits e and f, and the accessory subunits ATP6AP1/Ac45 and ATP6AP2/PRR. As to expression, testis specific.

Its function is as follows. Subunit of the V1 complex of vacuolar(H+)-ATPase (V-ATPase), a multisubunit enzyme composed of a peripheral complex (V1) that hydrolyzes ATP and a membrane integral complex (V0) that translocates protons. V-ATPase is responsible for acidifying and maintaining the pH of intracellular compartments and in some cell types, is targeted to the plasma membrane, where it is responsible for acidifying the extracellular environment. In Mus musculus (Mouse), this protein is V-type proton ATPase subunit E 2 (Atp6v1e2).